The primary structure comprises 314 residues: Putative thiamine biosynthesis protein HI_0357 (314 aa).

This sequence belongs to the NMT1/THI5 family.

Probably involved in thiamine biosynthesis. This Haemophilus influenzae (strain ATCC 51907 / DSM 11121 / KW20 / Rd) protein is Putative thiamine biosynthesis protein HI_0357.